Reading from the N-terminus, the 399-residue chain is Methylthioribose kinase (399 aa).

Residues Asn40, Lys57, and 111-113 (EDL) contribute to the ATP site. Asp229 contacts substrate. Residue 246–248 (DAE) participates in ATP binding. Substrate is bound at residue Arg344.

Belongs to the methylthioribose kinase family. Homodimer.

It carries out the reaction 5-(methylsulfanyl)-D-ribose + ATP = 5-(methylsulfanyl)-alpha-D-ribose 1-phosphate + ADP + H(+). It participates in amino-acid biosynthesis; L-methionine biosynthesis via salvage pathway; S-methyl-5-thio-alpha-D-ribose 1-phosphate from S-methyl-5'-thioadenosine (hydrolase route): step 2/2. Its function is as follows. Catalyzes the phosphorylation of methylthioribose into methylthioribose-1-phosphate. The polypeptide is Methylthioribose kinase (Citrobacter koseri (strain ATCC BAA-895 / CDC 4225-83 / SGSC4696)).